The chain runs to 292 residues: MSPLMLRLLPLLCIIISAHFVPRPETSPSLVYEIGSTVTFHCRLNTTTNIQSVSWYNKSRLISNHEIQNMDNLSFTDDGYVFIHELNKINNLDVDSKLYFHIKHDRTTSLLKIKARSAYDATCLTCTFTVDNEKTSATSCLKLIMKPIVVLYFRYLNNFLDVTCTVTSYPKPNVVIKFLGEVYKRDIPMVRQNENGSSTVSVSFTFKRRTKLEFVGKTISCLASSWFTNQKASALVTSGEHTVQNHDEYSKEAVKGSNSDETVFTWIVPLILILIISVMVLLISMCIVAFKS.

The first 18 residues, 1-18 (MSPLMLRLLPLLCIIISA), serve as a signal peptide directing secretion. Positions 24 to 136 (PETSPSLVYE…TFTVDNEKTS (113 aa)) constitute an Ig-like V-type domain. Cysteine 42 and cysteine 126 are joined by a disulfide. 4 N-linked (GlcNAc...) asparagine; by host glycosylation sites follow: asparagine 45, asparagine 57, asparagine 72, and asparagine 195. Residues 147–237 (PIVVLYFRYL…TNQKASALVT (91 aa)) enclose the Ig-like C2-type domain. The chain crosses the membrane as a helical span at residues 263-283 (VFTWIVPLILILIISVMVLLI).

It is found in the host membrane. This chain is Putative OX-2 membrane glycoprotein homolog (U85), found in Human herpesvirus 6B (strain Z29) (HHV-6 variant B).